A 239-amino-acid polypeptide reads, in one-letter code: Guanylate kinase (239 aa).

Residues 55–235 (GRIFVITGPS…TLAELQAILL (181 aa)) enclose the Guanylate kinase-like domain. Residue 62 to 69 (GPSGVGKS) coordinates ATP.

The protein belongs to the guanylate kinase family.

Its subcellular location is the cytoplasm. The catalysed reaction is GMP + ATP = GDP + ADP. Functionally, essential for recycling GMP and indirectly, cGMP. This chain is Guanylate kinase (gmk), found in Mycoplasma pneumoniae (strain ATCC 29342 / M129 / Subtype 1) (Mycoplasmoides pneumoniae).